Reading from the N-terminus, the 402-residue chain is Formate-dependent phosphoribosylglycinamide formyltransferase (402 aa).

N(1)-(5-phospho-beta-D-ribosyl)glycinamide-binding positions include Glu-25–Leu-26 and Glu-85. ATP contacts are provided by residues Arg-118, Lys-159, Ser-164–Gln-169, Glu-199–Val-202, and Glu-207. An ATP-grasp domain is found at Arg-123–Leu-318. Glu-277 and Glu-289 together coordinate Mg(2+). N(1)-(5-phospho-beta-D-ribosyl)glycinamide-binding positions include Asp-296, Lys-365, and Arg-372–Arg-373.

Belongs to the PurK/PurT family. Homodimer.

It catalyses the reaction N(1)-(5-phospho-beta-D-ribosyl)glycinamide + formate + ATP = N(2)-formyl-N(1)-(5-phospho-beta-D-ribosyl)glycinamide + ADP + phosphate + H(+). The protein operates within purine metabolism; IMP biosynthesis via de novo pathway; N(2)-formyl-N(1)-(5-phospho-D-ribosyl)glycinamide from N(1)-(5-phospho-D-ribosyl)glycinamide (formate route): step 1/1. Functionally, involved in the de novo purine biosynthesis. Catalyzes the transfer of formate to 5-phospho-ribosyl-glycinamide (GAR), producing 5-phospho-ribosyl-N-formylglycinamide (FGAR). Formate is provided by PurU via hydrolysis of 10-formyl-tetrahydrofolate. In Corynebacterium efficiens (strain DSM 44549 / YS-314 / AJ 12310 / JCM 11189 / NBRC 100395), this protein is Formate-dependent phosphoribosylglycinamide formyltransferase.